The primary structure comprises 387 residues: Protein salvador homolog 1 (387 aa).

A phosphoserine mark is found at serine 95 and serine 138. 2 consecutive WW domains span residues 201–234 (LPLP…HPLE) and 236–269 (EGLP…HPCA). Phosphothreonine is present on threonine 212. The SARAH domain occupies 323–370 (ILKWELFQLADLDTYQGMLKLLFMKELEQIVKLYEAYRQALVTELENR).

Homodimer. Stabilized through interaction with STK3/MST2 or STK4/MST1. Interacts (via SARAH domain) with isoform 1 of NEK2. Interacts with ESR1 only in the presence of STK3/MST2. Interacts with WTIP and AJUBA. Post-translationally, phosphorylated by STK3/MST2 and STK4/MST1. Phosphorylation is not required for SAV1 stability and may increase the number of protein binding sites on the scaffold molecule.

The protein resides in the nucleus. The protein localises to the cytoplasm. In terms of biological role, regulator of STK3/MST2 and STK4/MST1 in the Hippo signaling pathway which plays a pivotal role in organ size control and tumor suppression by restricting proliferation and promoting apoptosis. The core of this pathway is composed of a kinase cascade wherein STK3/MST2 and STK4/MST1, in complex with its regulatory protein SAV1, phosphorylates and activates LATS1/2 in complex with its regulatory protein MOB1, which in turn phosphorylates and inactivates YAP1 oncoprotein and WWTR1/TAZ. Phosphorylation of YAP1 by LATS1/2 inhibits its translocation into the nucleus to regulate cellular genes important for cell proliferation, cell death, and cell migration. SAV1 is required for STK3/MST2 and STK4/MST1 activation and promotes cell-cycle exit and terminal differentiation in developing epithelial tissues. Plays a role in centrosome disjunction by regulating the localization of NEK2 to centrosomes, and its ability to phosphorylate CROCC and CEP250. In conjunction with STK3/MST2, activates the transcriptional activity of ESR1 through the modulation of its phosphorylation. The chain is Protein salvador homolog 1 from Rattus norvegicus (Rat).